A 797-amino-acid chain; its full sequence is Inulosucrase (797 aa).

Residues 1–36 form the signal peptide; it reads MLENKNHKKISLSGKSLLMGTLSTAAIVLSASTANA. The span at 54-64 shows a compositional bias: polar residues; sequence ASSVNNENNKQ. Residues 54 to 176 form a disordered region; the sequence is ASSVNNENNK…SVKPAENATK (123 aa). Basic and acidic residues-rich tracts occupy residues 65-75 and 82-95; these read VTEKDSADKST and ANTK…ETTE. Residues 130–139 are compositionally biased toward low complexity; sequence DQKTTNAATT. Residues 140 to 167 show a composition bias toward basic and acidic residues; the sequence is DTKKDDVKQVEKKDSVDKTNAEENKDSS. Residue W271 participates in substrate binding. The active-site Nucleophile is the D272. Residue N317 coordinates Ca(2+). S340 is a substrate binding site. D419 serves as a coordination point for Ca(2+). 424 to 425 is a substrate binding site; the sequence is RD. 4 residues coordinate Ca(2+): Q450, W487, N489, and D521. Substrate contacts are provided by residues 522–524 and R542; that span reads EIE. The active-site Proton donor/acceptor is E524. Residues D660, I662, and S667 each coordinate Ca(2+). Residues 708–766 form a disordered region; sequence QPVTPIPNVPTTPETPTTPDKPEVPTTPEVPTTPETPTPEAPKNPVKKTSQSKLPKAGD. A compositionally biased stretch (low complexity) spans 718–740; sequence TTPETPTTPDKPEVPTTPEVPTT. Residues 761-765 carry the LPXTG sorting signal motif; it reads LPKAG. A764 is subject to Pentaglycyl murein peptidoglycan amidated alanine. Positions 765 to 797 are cleaved as a propeptide — removed by sortase; sequence GDKNSFAAVVLGAVSSILGAVGLTGVSKRKRNN.

This sequence belongs to the glycosyl hydrolase 68 family. It depends on Ca(2+) as a cofactor.

It is found in the secreted. Its subcellular location is the cell wall. It catalyses the reaction [(2-&gt;1)-beta-D-fructosyl](n) + sucrose = [(2-&gt;1)-beta-D-fructosyl](n+1) + D-glucose. Its function is as follows. Fructosyltransferase that catalyzes the polymerization of the fructose moiety of sucrose to produce inulin polymer and inulin oligosaccharides such as 1-kestose and nystose. The protein is Inulosucrase of Lactobacillus johnsonii (strain CNCM I-12250 / La1 / NCC 533).